We begin with the raw amino-acid sequence, 262 residues long: ATP synthase subunit a (262 aa).

The next 5 helical transmembrane spans lie at 24 to 44 (AVHL…LVVF), 85 to 105 (IAPL…IDLV), 129 to 149 (DISA…FYTV), 194 to 214 (LFGN…MYMA), and 228 to 248 (LVWA…FMML).

Belongs to the ATPase A chain family. F-type ATPases have 2 components, CF(1) - the catalytic core - and CF(0) - the membrane proton channel. CF(1) has five subunits: alpha(3), beta(3), gamma(1), delta(1), epsilon(1). CF(0) has three main subunits: a(1), b(2) and c(9-12). The alpha and beta chains form an alternating ring which encloses part of the gamma chain. CF(1) is attached to CF(0) by a central stalk formed by the gamma and epsilon chains, while a peripheral stalk is formed by the delta and b chains.

It localises to the cell inner membrane. Key component of the proton channel; it plays a direct role in the translocation of protons across the membrane. In Haemophilus ducreyi (strain 35000HP / ATCC 700724), this protein is ATP synthase subunit a.